The sequence spans 62 residues: Small EDRK-rich factor 1 (62 aa).

Basic and acidic residues-rich tracts occupy residues 1–30 (MARG…KEDS) and 50–62 (IANE…TTEK). The disordered stretch occupies residues 1-62 (MARGNQREIA…EKKSMQTTEK (62 aa)).

The protein belongs to the SERF family. In terms of assembly, interacts with SNCA; this interaction promotes the aggregation of SNCA. Expressed in brain (at protein level). Highly expressed in the testis.

It localises to the cytoplasm. The protein localises to the cytosol. The protein resides in the nucleus. In terms of biological role, positive regulator of amyloid protein aggregation and proteotoxicity. Induces conformational changes in amyloid proteins, such as APP, HTT, and SNCA, driving them into compact formations preceding the formation of aggregates. The chain is Small EDRK-rich factor 1 (Serf1) from Mus musculus (Mouse).